A 271-amino-acid chain; its full sequence is Interleukin-1 alpha (271 aa).

Residues Met1–Arg112 constitute a propeptide that is removed on maturation. At Lys82 the chain carries N6-acetyllysine. The segment at Lys82–Leu86 is nuclear localization signal (NLS). Ser87 carries the phosphoserine modification. N-linked (GlcNAc...) asparagine glycans are attached at residues Asn102, Asn121, Asn137, and Asn141.

Belongs to the IL-1 family. As to quaternary structure, monomer. Interacts with TMED10; the interaction mediates the translocation from the cytoplasm into the ERGIC (endoplasmic reticulum-Golgi intermediate compartment) and thereby secretion. Interacts with IL1R1. Interacts with S100A13; this interaction is the first step in the export of IL1A, followed by direct translocation of this complex across the plasma membrane. Post-translationally, acetylated within its nuclear localization sequence, which impacts subcellular localization. In terms of processing, proteolytic processed by CAPN1 in a calcium-dependent manner. Cleavage from 31 kDa precursor to 18 kDa biologically active molecules. Phosphorylated. Phosphorylation greatly enhances susceptibility to digestion and promotes the conversion of pre-IL1A alpha to the biologically active IL1A.

The protein localises to the nucleus. Its subcellular location is the cytoplasm. The protein resides in the secreted. In terms of biological role, cytokine constitutively present intracellularly in nearly all resting non-hematopoietic cells that plays an important role in inflammation and bridges the innate and adaptive immune systems. After binding to its receptor IL1R1 together with its accessory protein IL1RAP, forms the high affinity interleukin-1 receptor complex. Signaling involves the recruitment of adapter molecules such as MYD88, IRAK1 or IRAK4. In turn, mediates the activation of NF-kappa-B and the three MAPK pathways p38, p42/p44 and JNK pathways. Within the cell, acts as an alarmin and cell death results in its liberation in the extracellular space after disruption of the cell membrane to induce inflammation and alert the host to injury or damage. In addition to its role as a danger signal, which occurs when the cytokine is passively released by cell necrosis, directly senses DNA damage and acts as signal for genotoxic stress without loss of cell integrity. This Macaca fascicularis (Crab-eating macaque) protein is Interleukin-1 alpha (IL1A).